A 189-amino-acid polypeptide reads, in one-letter code: Large ribosomal subunit protein uL5 (189 aa).

This sequence belongs to the universal ribosomal protein uL5 family. As to quaternary structure, part of the 50S ribosomal subunit; part of the 5S rRNA/L5/L18/L25 subcomplex. Contacts the 5S rRNA and the P site tRNA. Forms a bridge to the 30S subunit in the 70S ribosome.

In terms of biological role, this is one of the proteins that bind and probably mediate the attachment of the 5S RNA into the large ribosomal subunit, where it forms part of the central protuberance. In the 70S ribosome it contacts protein S13 of the 30S subunit (bridge B1b), connecting the 2 subunits; this bridge is implicated in subunit movement. Contacts the P site tRNA; the 5S rRNA and some of its associated proteins might help stabilize positioning of ribosome-bound tRNAs. The polypeptide is Large ribosomal subunit protein uL5 (Kineococcus radiotolerans (strain ATCC BAA-149 / DSM 14245 / SRS30216)).